The sequence spans 745 residues: MRLALFALFALMTVATALPAHAEKLTLEAITGSAPLSGPTLTKPQIAPDGSRVTFLRGKDRDRNRLDLWEYDIASGQTRLLVDSSVVLPGEEVLSDEEKARRERQRIAALSGIVDYQWSPDGKALLFPLGGELYFYDLTKSGRDAVRKLTNGGGFATDPKISPKGGFVSFIRDRNLWAIDLASGKEVQLTRDGSDTIGNGVAEFVADEEMDRHTGYWWAPDDAAIAFARIDETPVPVQKRYEVYPDRTEVVEQRYPAAGDHNVRVQLGVIAPKTGARPRWIDLGKDPDIYLARVDWRDPQRLTFQRQSRDQKKIELIETTLTNGTQRTLVTETSTTWVPLHNDLRFLKDGRFLWSSERSGFEHLYVASEDGSTLTALTQGEWVVDSLLAIDEAAGLAYVSGTRDGATEAHVYAVPLSGGEPRRLTQAPGMHAATFARNASVFVDSWSSDTTLPQIELFKADGTKLATLLVNDVSDATHPYAKYRAAHQPTAYGTLTAADGTTPLHYSLIKPAGFDPKKQYPVVVFVYGGPAAQTVTRAWPGRSDSFFNQYLAQQGYVVFTLDNRGTPRRGAAFGGALYGKQGTVEVDDQLRGIEWLKSQAFVDPARIGVYGWSNGGYMTLMLLAKHDEAYACGVAGAPVTDWALYDTHYTERYMDLPKANEAGYREASVFTHVDGIGAGKLLLIHGMADDNVLFTNSTKLMSELQKRGTPFELMTYPGAKHGLRGSDLLHRYRLTEDFFARCLKP.

The first 22 residues, 1-22 (MRLALFALFALMTVATALPAHA), serve as a signal peptide directing secretion. 2 residues coordinate substrate: Glu-208 and Glu-209. Active-site charge relay system residues include Ser-613, Asp-689, and His-721.

The protein belongs to the peptidase S9B family. Homodimer.

Its subcellular location is the cytoplasm. It is found in the periplasm. The enzyme catalyses Release of an N-terminal dipeptide, Xaa-Yaa-|-Zaa-, from a polypeptide, preferentially when Yaa is Pro, provided Zaa is neither Pro nor hydroxyproline.. With respect to regulation, completely inhibited by the serine protease inhibitor diisopropyl fluorophosphate (DFP) and moderately by N-tosyl-L-phenyl-alanyl chloromethyl ketone (TPCK). Somewhat inhibited by phenylmethanesulfonyl fluoride (PMSF). Activity is not affected by thiol- or metalloprotease inhibitors, such as iodoacetate (IAA), EDTA, N-tosyl-L-lysyl chloromethyl ketone (TLCK), o-phenanthlorine, N-ethylmaleimide (NEM) or dithiothreitol (DTT). Its function is as follows. Catalyzes the sequential release of Tyr-Pro, Phe-Pro and Gly-Pro from the N-terminus of peptides and proteins. Is able to cleaves bioactive peptide beta-casomorphin. This chain is Dipeptidyl aminopeptidase 4, found in Pseudoxanthomonas mexicana.